A 312-amino-acid chain; its full sequence is 2,3-dihydroxyphenylpropionate/2,3-dihydroxicinnamic acid 1,2-dioxygenase (312 aa).

The active-site Proton donor is His115. His179 serves as the catalytic Proton acceptor.

It belongs to the LigB/MhpB extradiol dioxygenase family. Homotetramer. It depends on Fe(2+) as a cofactor.

It carries out the reaction 3-(2,3-dihydroxyphenyl)propanoate + O2 = (2Z,4E)-2-hydroxy-6-oxonona-2,4-dienedioate + H(+). It catalyses the reaction (2E)-3-(2,3-dihydroxyphenyl)prop-2-enoate + O2 = (2Z,4E,7E)-2-hydroxy-6-oxonona-2,4,7-trienedioate + H(+). It functions in the pathway aromatic compound metabolism; 3-phenylpropanoate degradation. In terms of biological role, catalyzes the non-heme iron(II)-dependent oxidative cleavage of 2,3-dihydroxyphenylpropionic acid and 2,3-dihydroxicinnamic acid into 2-hydroxy-6-ketononadienedioate and 2-hydroxy-6-ketononatrienedioate, respectively. This chain is 2,3-dihydroxyphenylpropionate/2,3-dihydroxicinnamic acid 1,2-dioxygenase, found in Mycolicibacterium paratuberculosis (strain ATCC BAA-968 / K-10) (Mycobacterium paratuberculosis).